Consider the following 215-residue polypeptide: dITP/XTP pyrophosphatase (215 aa).

13-18 contacts substrate; the sequence is THNIGK. Catalysis depends on Asp-74, which acts as the Proton acceptor. Asp-74 is a Mg(2+) binding site. Residues Ser-75, 163–166, Lys-186, and 199–200 each bind substrate; these read FGFD and HR.

Belongs to the HAM1 NTPase family. Homodimer. Mg(2+) is required as a cofactor.

It carries out the reaction XTP + H2O = XMP + diphosphate + H(+). The enzyme catalyses dITP + H2O = dIMP + diphosphate + H(+). The catalysed reaction is ITP + H2O = IMP + diphosphate + H(+). Pyrophosphatase that catalyzes the hydrolysis of nucleoside triphosphates to their monophosphate derivatives, with a high preference for the non-canonical purine nucleotides XTP (xanthosine triphosphate), dITP (deoxyinosine triphosphate) and ITP. Seems to function as a house-cleaning enzyme that removes non-canonical purine nucleotides from the nucleotide pool, thus preventing their incorporation into DNA/RNA and avoiding chromosomal lesions. The chain is dITP/XTP pyrophosphatase from Bartonella henselae (strain ATCC 49882 / DSM 28221 / CCUG 30454 / Houston 1) (Rochalimaea henselae).